The sequence spans 472 residues: MSEPTGKILAIMGAVVDVEFPDGHLPKLNHALVIRNGGERGDINLTLEVAQHLGNNQVRCIAMDSTDGLRRGETVYDTQAPITVPVGEPVLGRIFNVLGETIDGKGPVNSPVSLPIHREPPGVANVDPATEMLPTGIKVIDLLCPYARGGKIGLFGGAGVGKTVMIQELIHNIAYKFGGYSIFAGVGERTREGNDLYHEMIEAGVIDKVAMVFGQMNEPPGARMRVALTGLTMAEYFRDEQGLDVLLFIDNIFRFTQAGSEVSALLGRMPSAVGYQPTLATEMGYLQERITSTKKGSITSVQAIYVPADDLTDPAPATTFAHLDATTVLSRAVFEKAIFPAVDPLDSTSRILDPNIVGREHYEVARGVQKVLQRYKELQDIIAILGMDELSDEDKLIVARARKIERFLSQPMFVAEKFTNLPGVFVDPKDTVKGFKEILEGKHDDLPEQAFYMVGTIEQAVEKGKKLLAEVS.

156–163 (GGAGVGKT) contacts ATP.

This sequence belongs to the ATPase alpha/beta chains family. F-type ATPases have 2 components, CF(1) - the catalytic core - and CF(0) - the membrane proton channel. CF(1) has five subunits: alpha(3), beta(3), gamma(1), delta(1), epsilon(1). CF(0) has three main subunits: a(1), b(2) and c(9-12). The alpha and beta chains form an alternating ring which encloses part of the gamma chain. CF(1) is attached to CF(0) by a central stalk formed by the gamma and epsilon chains, while a peripheral stalk is formed by the delta and b chains.

The protein localises to the cell membrane. It catalyses the reaction ATP + H2O + 4 H(+)(in) = ADP + phosphate + 5 H(+)(out). Produces ATP from ADP in the presence of a proton gradient across the membrane. The catalytic sites are hosted primarily by the beta subunits. The chain is ATP synthase subunit beta from Symbiobacterium thermophilum (strain DSM 24528 / JCM 14929 / IAM 14863 / T).